Consider the following 60-residue polypeptide: Large ribosomal subunit protein bL33 (60 aa).

This sequence belongs to the bacterial ribosomal protein bL33 family.

The chain is Large ribosomal subunit protein bL33 from Chlorobaculum tepidum (strain ATCC 49652 / DSM 12025 / NBRC 103806 / TLS) (Chlorobium tepidum).